We begin with the raw amino-acid sequence, 493 residues long: Guanosine-5'-triphosphate,3'-diphosphate pyrophosphatase (493 aa).

It belongs to the GppA/Ppx family. GppA subfamily.

The enzyme catalyses guanosine 3'-diphosphate 5'-triphosphate + H2O = guanosine 3',5'-bis(diphosphate) + phosphate + H(+). It participates in purine metabolism; ppGpp biosynthesis; ppGpp from GTP: step 2/2. Catalyzes the conversion of pppGpp to ppGpp. Guanosine pentaphosphate (pppGpp) is a cytoplasmic signaling molecule which together with ppGpp controls the 'stringent response', an adaptive process that allows bacteria to respond to amino acid starvation, resulting in the coordinated regulation of numerous cellular activities. The polypeptide is Guanosine-5'-triphosphate,3'-diphosphate pyrophosphatase (Salmonella dublin (strain CT_02021853)).